The following is a 447-amino-acid chain: N-succinylarginine dihydrolase (447 aa).

Residues 19–28 (AGLSFGNEAS), asparagine 110, and 137–138 (HR) each bind substrate. Glutamate 174 is an active-site residue. Arginine 212 provides a ligand contact to substrate. Histidine 248 is a catalytic residue. Positions 250 and 359 each coordinate substrate. The active-site Nucleophile is the cysteine 365.

It belongs to the succinylarginine dihydrolase family. As to quaternary structure, homodimer.

It catalyses the reaction N(2)-succinyl-L-arginine + 2 H2O + 2 H(+) = N(2)-succinyl-L-ornithine + 2 NH4(+) + CO2. It participates in amino-acid degradation; L-arginine degradation via AST pathway; L-glutamate and succinate from L-arginine: step 2/5. Its function is as follows. Catalyzes the hydrolysis of N(2)-succinylarginine into N(2)-succinylornithine, ammonia and CO(2). The polypeptide is N-succinylarginine dihydrolase (Escherichia coli O6:H1 (strain CFT073 / ATCC 700928 / UPEC)).